The following is a 314-amino-acid chain: Fumarylacetoacetate hydrolase domain-containing protein 2 (314 aa).

Positions 159, 161, and 190 each coordinate a divalent metal cation. Position 203 is an N6-acetyllysine; alternate (lysine 203). An N6-succinyllysine; alternate modification is found at lysine 203. Position 234 is an N6-acetyllysine (lysine 234).

Belongs to the FAH family. Ca(2+) is required as a cofactor. Requires Mg(2+) as cofactor.

Functionally, may have hydrolase activity. This is Fumarylacetoacetate hydrolase domain-containing protein 2 (FAHD2) from Pongo abelii (Sumatran orangutan).